The chain runs to 207 residues: ATP-dependent Clp protease proteolytic subunit (207 aa).

Serine 111 serves as the catalytic Nucleophile. Histidine 136 is an active-site residue.

This sequence belongs to the peptidase S14 family. In terms of assembly, fourteen ClpP subunits assemble into 2 heptameric rings which stack back to back to give a disk-like structure with a central cavity, resembling the structure of eukaryotic proteasomes.

The protein localises to the cytoplasm. It catalyses the reaction Hydrolysis of proteins to small peptides in the presence of ATP and magnesium. alpha-casein is the usual test substrate. In the absence of ATP, only oligopeptides shorter than five residues are hydrolyzed (such as succinyl-Leu-Tyr-|-NHMec, and Leu-Tyr-Leu-|-Tyr-Trp, in which cleavage of the -Tyr-|-Leu- and -Tyr-|-Trp bonds also occurs).. In terms of biological role, cleaves peptides in various proteins in a process that requires ATP hydrolysis. Has a chymotrypsin-like activity. Plays a major role in the degradation of misfolded proteins. The sequence is that of ATP-dependent Clp protease proteolytic subunit from Photorhabdus laumondii subsp. laumondii (strain DSM 15139 / CIP 105565 / TT01) (Photorhabdus luminescens subsp. laumondii).